The following is a 153-amino-acid chain: Nucleoside diphosphate kinase (153 aa).

The ATP site is built by Lys-11, Phe-59, Arg-87, Thr-93, Arg-104, and Asn-114. His-117 functions as the Pros-phosphohistidine intermediate in the catalytic mechanism.

The protein belongs to the NDK family. The cofactor is Mg(2+).

The enzyme catalyses a 2'-deoxyribonucleoside 5'-diphosphate + ATP = a 2'-deoxyribonucleoside 5'-triphosphate + ADP. It catalyses the reaction a ribonucleoside 5'-diphosphate + ATP = a ribonucleoside 5'-triphosphate + ADP. In terms of biological role, major role in the synthesis of nucleoside triphosphates other than ATP. The ATP gamma phosphate is transferred to the NDP beta phosphate via a ping-pong mechanism, using a phosphorylated active-site intermediate. This Emericella nidulans (strain FGSC A4 / ATCC 38163 / CBS 112.46 / NRRL 194 / M139) (Aspergillus nidulans) protein is Nucleoside diphosphate kinase (swoH).